A 2768-amino-acid polypeptide reads, in one-letter code: Thyroglobulin (2768 aa).

A signal peptide spans 1-19 (MALVLEIFTLLASICWVSA). Tyr24 is subject to Iodotyrosine; alternate. Tyr24 carries the sulfotyrosine; alternate modification. Tyr24 carries the thyroxine; alternate modification. A Triiodothyronine; alternate modification is found at Tyr24. Thyroglobulin type-1 domains lie at 31–92 (LRPC…PVAC), 93–160 (LSFC…PKRC), 161–297 (PRSC…RFRC), and 298–358 (PTKC…PPSC). 18 cysteine pairs are disulfide-bonded: Cys34–Cys52, Cys63–Cys70, Cys72–Cys92, Cys96–Cys120, Cys131–Cys138, Cys140–Cys160, Cys164–Cys183, Cys194–Cys235, Cys237–Cys297, Cys301–Cys319, Cys330–Cys336, Cys338–Cys358, Cys364–Cys620, Cys408–Cys608, Cys631–Cys636, Cys638–Cys658, Cys662–Cys687, and Cys698–Cys703. N-linked (GlcNAc...) asparagine glycosylation is present at Asn76. Position 108 is an iodotyrosine (Tyr108). A glycan (N-linked (GlcNAc...) asparagine) is linked at Asn110. An Iodotyrosine; alternate modification is found at Tyr149. Position 149 is a diiodotyrosine; alternate (Tyr149). Residue Asn198 is glycosylated (N-linked (GlcNAc...) asparagine). Tyr234 and Tyr258 each carry iodotyrosine. 2 N-linked (GlcNAc...) asparagine glycosylation sites follow: Asn484 and Asn529. Positions 521–545 (PLSVGLDSNSSTGTPEAAKKDGTMN) are disordered. Thyroglobulin type-1 domains follow at residues 605 to 658 (SQTC…QPRC), 659 to 726 (PTDC…PKKC), 727 to 921 (PTPC…LPTC), 922 to 1073 (PGSC…IPQC), 1074 to 1145 (PTTC…SAQC), and 1146 to 1210 (PSLC…QPAC). An Iodotyrosine; alternate modification is found at Tyr704. Tyr704 bears the Thyroxine; alternate mark. Tyr704 is modified (triiodothyronine; alternate). The residue at position 704 (Tyr704) is a Diiodotyrosine; alternate. Disulfide bonds link Cys705-Cys726, Cys730-Cys763, Cys774-Cys898, Cys900-Cys921, Cys925-Cys1031, Cys1042-Cys1049, Cys1051-Cys1073, Cys1077-Cys1108, Cys1126-Cys1145, Cys1149-Cys1169, Cys1181-Cys1188, Cys1190-Cys1210, Cys1215-Cys1264, Cys1231-Cys1245, Cys1306-Cys1356, and Cys1331-Cys1347. N-linked (GlcNAc...) asparagine glycosylation occurs at Asn748. At Tyr785 the chain carries Iodotyrosine. A glycan (N-linked (GlcNAc...) asparagine) is linked at Asn816. Tyr866 carries the post-translational modification Iodotyrosine; alternate. Tyr866 is modified (diiodotyrosine; alternate). Tyr883 is subject to Diiodotyrosine. N-linked (GlcNAc...) asparagine glycosylation occurs at Asn947. Tyr992 bears the Iodotyrosine; alternate mark. The residue at position 992 (Tyr992) is a Diiodotyrosine; alternate. Residue Asn1220 is glycosylated (N-linked (GlcNAc...) asparagine). An Iodotyrosine modification is found at Tyr1310. Tyr1310 carries the thyroxine modification. Residues Asn1348, Asn1349, and Asn1365 are each glycosylated (N-linked (GlcNAc...) asparagine). Cystine bridges form between Cys1440–Cys1459, Cys1462–Cys1473, Cys1476–Cys1490, Cys1493–Cys1510, Cys1514–Cys1523, Cys1543–Cys1565, Cys1603–Cys1627, Cys1607–Cys1613, and Cys1639–Cys1662. Type II repeat units lie at residues 1456–1469 (GLGC…SYSQ), 1470–1486 (DEEC…EQAG), and 1487–1503 (SLAC…ISAG). Iodotyrosine; alternate is present on Tyr1467. Residue Tyr1467 is modified to Diiodotyrosine; alternate. One can recognise a Thyroglobulin type-1 11 domain in the interval 1511 to 1565 (VTDCQRNEAGLQCDQNGQYRASQKDRGSGKAFCVDGEGRRLPWWETEAPLEDSQC). The Type IIIA repeat unit spans residues 1603 to 1723 (CLTDCTEDEA…GANLTDAHLF (121 aa)). Asn1716 carries an N-linked (GlcNAc...) asparagine glycan. Intrachain disulfides connect Cys1724/Cys1749, Cys1728/Cys1734, Cys1733/Cys1835, and Cys1760/Cys1777. The stretch at 1724 to 1892 (CLLACDRDLC…LFSAQQANLW (169 aa)) is one Type IIIB repeat. Asn1774 and Asn1869 each carry an N-linked (GlcNAc...) asparagine glycan. 7 disulfides stabilise this stretch: Cys1893/Cys1919, Cys1897/Cys1904, Cys1928/Cys1939, Cys1996/Cys2024, Cys2000/Cys2006, Cys2005/Cys2076, and Cys2035/Cys2048. The Type IIIA repeat unit spans residues 1893 to 1995 (CLSRCVQEHS…EKSISNGFFE (103 aa)). Residues 1996 to 2129 (CERRCDADPC…TSNFSAVRDL (134 aa)) form a Type IIIB repeat. An N-linked (GlcNAc...) asparagine glycan is attached at Asn2013. Residue Asn2122 is glycosylated (N-linked (GlcNAc...) asparagine). 3 disulfide bridges follow: Cys2130-Cys2154, Cys2134-Cys2140, and Cys2163-Cys2172. The Type IIIA repeat unit spans residues 2130 to 2187 (CLSECSQHEACLITTLQTQPGAVRCMFYADTQSCTHSLQGQNCRLLLREEATHIYRKP). Iodotyrosine is present on Tyr2184. Residues 2188-2768 (GISLLSYEAS…QEPGSKTYSK (581 aa)) are cholinesterase-like (ChEL). Asn2250 is a glycosylation site (N-linked (GlcNAc...) asparagine). Cys2264 and Cys2281 form a disulfide bridge. N-linked (GlcNAc...) asparagine glycosylation is present at Asn2295. A disulfide bridge links Cys2442 with Cys2453. At Tyr2540 the chain carries Iodotyrosine. Tyr2573 is subject to Iodotyrosine; alternate. A Thyroxine; alternate modification is found at Tyr2573. Tyr2573 is modified (triiodothyronine; alternate). Tyr2573 bears the Diiodotyrosine; alternate mark. Residue Asn2582 is glycosylated (N-linked (GlcNAc...) asparagine). 2 positions are modified to iodotyrosine: Tyr2587 and Tyr2617. The cysteines at positions 2591 and 2715 are disulfide-linked. Residue Tyr2697 is modified to Diiodotyrosine. The disordered stretch occupies residues 2727-2768 (TSADGAKGGQSAESEEEELTAGSGLREDLLSLQEPGSKTYSK). An O-linked (Xyl...) (chondroitin sulfate) serine glycan is attached at Ser2749. Position 2766 is an iodotyrosine; alternate (Tyr2766). Tyr2766 carries the thyroxine; alternate modification. Tyr2766 carries the post-translational modification Triiodothyronine; alternate. A Diiodotyrosine; alternate modification is found at Tyr2766.

This sequence belongs to the type-B carboxylesterase/lipase family. In terms of assembly, monomer. Homodimer (via ChEL region); occurs in the endoplasmic reticulum and is required for export to the Golgi apparatus. Homooligomer; disulfide-linked; stored in this form in the thyroid follicle lumen. Iodinated on tyrosine residues by TPO. There are 4 pairs of iodinated tyrosines used for coupling: acceptor Tyr-24 is coupled to donor Tyr-149 or Tyr-234, acceptor Tyr-2573 is coupled to donor Tyr-2540, acceptor Tyr-2766 in monomer 1 is coupled to donor Tyr-2766 in monomer 2 and acceptor Tyr-1310 in monomer 1 is coupled to donor Tyr-108 in monomer 2. Post-translationally, sulfated tyrosines are desulfated during iodination. In terms of processing, undergoes sequential proteolysis by cathepsins to release thyroxine (T4) and triiodothyronine (T3) hormones. In the thyroid follicle lumen, cross-linked TG (storage form) is solubilized by limited proteolysis mediated by cathepsins CTSB and/or CTSL. Partially cleaved TG is further processed by CTSK/cathepsin K and/or CTSL resulting in the release of T4. Following endocytosis, further processing occurs leading to the release of T3 and more T4 hormones. As to expression, specifically expressed in the thyroid gland.

The protein localises to the secreted. Acts as a substrate for the production of iodinated thyroid hormones thyroxine (T4) and triiodothyronine (T3). The synthesis of T3 and T4 involves iodination of selected tyrosine residues of TG/thyroglobulin followed by their oxidative coupling in the thyroid follicle lumen. Following TG re-internalization and lysosomal-mediated proteolysis, T3 and T4 are released from the polypeptide backbone leading to their secretion into the bloodstream. One dimer produces 7 thyroid hormone molecules. This chain is Thyroglobulin, found in Homo sapiens (Human).